A 103-amino-acid chain; its full sequence is Secreted Ly-6/uPAR-related protein 1 (103 aa).

The first 22 residues, 1–22, serve as a signal peptide directing secretion; it reads MASRWAVQLLLVAAWSMGCGEA. Residues 24–73 form the UPAR/Ly6 domain; the sequence is KCYTCKEPMTSASCRTITRCKPEDTACMTTLVTVEAEYPFNQSPVVTRSC. 5 cysteine pairs are disulfide-bonded: C25/C50, C28/C37, C43/C73, C77/C93, and C94/C99.

As to quaternary structure, homodimer. Interacts with PLAU. Interacts with CHRNA7. Granulocytes. Expressed in skin. Predominantly expressed in the granular layer of skin, notably the acrosyringium. Identified in several biological fluids such as sweat, saliva, tears, plasma and urine.

The protein localises to the secreted. Functionally, has an antitumor activity. Was found to be a marker of late differentiation of the skin. Implicated in maintaining the physiological and structural integrity of the keratinocyte layers of the skin. In vitro down-regulates keratinocyte proliferation; the function may involve the proposed role as modulator of nicotinic acetylcholine receptors (nAChRs) activity. In vitro inhibits alpha-7-dependent nAChR currents in an allosteric manner. In T cells may be involved in regulation of intracellular Ca(2+) signaling. Seems to have an immunomodulatory function in the cornea. The function may implicate a possible role as a scavenger receptor for PLAU thereby blocking PLAU-dependent functions of PLAUR such as in cell migration and proliferation. The chain is Secreted Ly-6/uPAR-related protein 1 (SLURP1) from Homo sapiens (Human).